A 506-amino-acid polypeptide reads, in one-letter code: Maturase K (506 aa).

It belongs to the intron maturase 2 family. MatK subfamily.

The protein resides in the plastid. It is found in the chloroplast. Functionally, usually encoded in the trnK tRNA gene intron. Probably assists in splicing its own and other chloroplast group II introns. The sequence is that of Maturase K from Prunus persica (Peach).